The sequence spans 703 residues: DnaJ homolog subfamily C member 14 (703 aa).

Residues 1–11 are compositionally biased toward basic and acidic residues; sequence MAQKHPGERRL. A disordered region spans residues 1–229; that stretch reads MAQKHPGERR…GRHRLARKRS (229 aa). Low complexity predominate over residues 17–28; sequence SGGTSLSTSGSS. The span at 75-84 shows a compositional bias: pro residues; sequence HGPPRGPGPP. Acidic residues predominate over residues 91 to 102; sequence DESETGSEESGV. Positions 121–133 are enriched in polar residues; sequence SFLSIPSACNCQG. Acidic residues predominate over residues 163–176; sequence GEDEELEEEYDDEE. A compositionally biased stretch (basic residues) spans 193–202; it reads PLSRRQKHRF. The segment covering 203–218 has biased composition (basic and acidic residues); it reads LIKEDVRDSGRREPKA. The span at 219 to 228 shows a compositional bias: basic residues; sequence PGRHRLARKR. A run of 2 helical transmembrane segments spans residues 305–325 and 327–347; these read MMFQ…IRIL and VVGA…QLGW. One can recognise a J domain in the interval 444 to 508; that stretch reads NPFHVLGVEA…ERRKEYEMKR (65 aa). 2 disordered regions span residues 622–643 and 659–703; these read FGSR…PPAD and MSNG…PFQR. The segment covering 673–684 has biased composition (polar residues); the sequence is GTTSTSRPNSSV. Residues 691 to 703 show a composition bias toward basic residues; sequence PKRRKKVRRPFQR.

Interacts with the FxxxFxxxF motif of DRD1 via its C-terminal domain.

It localises to the endoplasmic reticulum membrane. In terms of biological role, regulates the export of target proteins, such as DRD1, from the endoplasmic reticulum to the cell surface. In Mus musculus (Mouse), this protein is DnaJ homolog subfamily C member 14 (Dnajc14).